The sequence spans 143 residues: Large ribosomal subunit protein uL11 (143 aa).

This sequence belongs to the universal ribosomal protein uL11 family. In terms of assembly, part of the ribosomal stalk of the 50S ribosomal subunit. Interacts with L10 and the large rRNA to form the base of the stalk. L10 forms an elongated spine to which L12 dimers bind in a sequential fashion forming a multimeric L10(L12)X complex. In terms of processing, one or more lysine residues are methylated.

Its function is as follows. Forms part of the ribosomal stalk which helps the ribosome interact with GTP-bound translation factors. The sequence is that of Large ribosomal subunit protein uL11 from Psychrobacter sp. (strain PRwf-1).